Here is a 165-residue protein sequence, read N- to C-terminus: NADPH-dependent 7-cyano-7-deazaguanine reductase (165 aa).

The Thioimide intermediate role is filled by cysteine 56. The active-site Proton donor is the aspartate 63. Substrate contacts are provided by residues 78 to 80 (VES) and 97 to 98 (HE).

This sequence belongs to the GTP cyclohydrolase I family. QueF type 1 subfamily.

It is found in the cytoplasm. The catalysed reaction is 7-aminomethyl-7-carbaguanine + 2 NADP(+) = 7-cyano-7-deazaguanine + 2 NADPH + 3 H(+). The protein operates within tRNA modification; tRNA-queuosine biosynthesis. Functionally, catalyzes the NADPH-dependent reduction of 7-cyano-7-deazaguanine (preQ0) to 7-aminomethyl-7-deazaguanine (preQ1). This chain is NADPH-dependent 7-cyano-7-deazaguanine reductase, found in Oceanobacillus iheyensis (strain DSM 14371 / CIP 107618 / JCM 11309 / KCTC 3954 / HTE831).